The primary structure comprises 430 residues: CC-adding tRNA nucleotidyltransferase (430 aa).

33-36 serves as a coordination point for CTP; the sequence is GCVR. Mg(2+) is bound by residues Asp46 and Asp48. Residues 108 to 109, Asn113, 150 to 159, and Arg190 contribute to the CTP site; these read RD and DPLRIVRAYR.

It belongs to the tRNA nucleotidyltransferase/poly(A) polymerase family. The cofactor is Mg(2+).

It carries out the reaction a tRNA precursor + 2 CTP = a tRNA with a 3' CC end + 2 diphosphate. Functionally, tRNA nucleotidyltransferase involved in the synthesis of the tRNA CCA terminus. Adds the two cytidine residues to tRNA. This is CC-adding tRNA nucleotidyltransferase from Geobacter sulfurreducens (strain ATCC 51573 / DSM 12127 / PCA).